A 215-amino-acid chain; its full sequence is MIGWLQGERIQSWEQGGRRGVVVACGGVGYEVQLTSRDQNGQGTGSACTLWVHQVQRDDGSTLFGFCDQQERDLFRTLIGVNGVGPQMALALLDCCRVHELVAAIVDGDLKRLTQAQGVGKRTAERIAVELRDRLGNWAPLQEPSLSLVDRSDVKAIPLGEPCLRDLQITLETLGYEDLEIRRAMRAVASGPDVPAEDDGDAWLRASLKWLSQSA.

Positions 1–67 (MIGWLQGERI…DDGSTLFGFC (67 aa)) are domain I. The tract at residues 68-146 (DQQERDLFRT…NWAPLQEPSL (79 aa)) is domain II. The segment at 147–158 (SLVDRSDVKAIP) is flexible linker. Positions 159-215 (LGEPCLRDLQITLETLGYEDLEIRRAMRAVASGPDVPAEDDGDAWLRASLKWLSQSA) are domain III.

The protein belongs to the RuvA family. In terms of assembly, homotetramer. Forms an RuvA(8)-RuvB(12)-Holliday junction (HJ) complex. HJ DNA is sandwiched between 2 RuvA tetramers; dsDNA enters through RuvA and exits via RuvB. An RuvB hexamer assembles on each DNA strand where it exits the tetramer. Each RuvB hexamer is contacted by two RuvA subunits (via domain III) on 2 adjacent RuvB subunits; this complex drives branch migration. In the full resolvosome a probable DNA-RuvA(4)-RuvB(12)-RuvC(2) complex forms which resolves the HJ.

The protein resides in the cytoplasm. Functionally, the RuvA-RuvB-RuvC complex processes Holliday junction (HJ) DNA during genetic recombination and DNA repair, while the RuvA-RuvB complex plays an important role in the rescue of blocked DNA replication forks via replication fork reversal (RFR). RuvA specifically binds to HJ cruciform DNA, conferring on it an open structure. The RuvB hexamer acts as an ATP-dependent pump, pulling dsDNA into and through the RuvAB complex. HJ branch migration allows RuvC to scan DNA until it finds its consensus sequence, where it cleaves and resolves the cruciform DNA. The chain is Holliday junction branch migration complex subunit RuvA from Synechococcus sp. (strain WH7803).